Consider the following 255-residue polypeptide: Ornithine decarboxylase antizyme (255 aa).

This sequence belongs to the ODC antizyme family. Interacts with ODC and thereby sterically blocks ODC homodimerization.

Ornithine decarboxylase (ODC) antizyme protein that negatively regulates ODC activity and intracellular polyamine biosynthesis in response to increased intracellular polyamine levels. Binds to ODC monomers, inhibiting the assembly of the functional ODC homodimer, and targets the monomers for ubiquitin-independent proteolytic destruction by the 26S proteasome. This chain is Ornithine decarboxylase antizyme (OAZ1), found in Candida glabrata (strain ATCC 2001 / BCRC 20586 / JCM 3761 / NBRC 0622 / NRRL Y-65 / CBS 138) (Yeast).